The sequence spans 102 residues: Serum amyloid A-5 protein (102 aa).

The disordered stretch occupies residues 68 to 102 (GRGHEDSMADQEANRWGRSGNDPNHYRPAGLPDKY). Residues 69 to 82 (RGHEDSMADQEANR) show a composition bias toward basic and acidic residues.

This sequence belongs to the SAA family. In terms of tissue distribution, expressed by the liver; secreted in plasma.

It localises to the secreted. In terms of biological role, major acute phase reactant. Apolipoprotein of the HDL complex. The polypeptide is Serum amyloid A-5 protein (Mesocricetus auratus (Golden hamster)).